The primary structure comprises 214 residues: Sugar transporter SWEET1 (214 aa).

Transmembrane regions (helical) follow at residues 3 to 23 (WMWL…SSGL), 38 to 58 (IQFL…YYGY), 65 to 85 (LIIV…AYIL), 93 to 113 (VVSQ…YFTL), 125 to 145 (LGLF…ADLA), 157 to 177 (SFPL…YGWV), and 181 to 201 (LYIT…FWLF). Residues 6–89 (LLSGACIVFT…MAAYILYSLE (84 aa)) enclose the MtN3/slv 1 domain. The MtN3/slv 2 domain occupies 124 to 207 (QLGLFCSIFT…FWLFSRYPPD (84 aa)).

It belongs to the SWEET sugar transporter family.

It localises to the golgi apparatus membrane. Its subcellular location is the cell membrane. Its function is as follows. Mediates sugar transport across membranes. The sequence is that of Sugar transporter SWEET1 (slc50a1) from Xenopus tropicalis (Western clawed frog).